Here is a 366-residue protein sequence, read N- to C-terminus: Bacteriochlorophyll a protein (366 aa).

The bacteriochlorophyll a site is built by H110, H145, H290, H297, and H298.

As to quaternary structure, homotrimer. Each subunit contains 7 molecules of bacteriochlorophyll a.

Intermediary in the transfer of excitation energy from the chlorophyll to the reaction centers. In Prosthecochloris aestuarii, this protein is Bacteriochlorophyll a protein.